A 441-amino-acid chain; its full sequence is MLLPGRARQPPTPQPVQHPGLRRQVEPPGQLLRLFYCTVLVCSKEISALTDFSGYLTKLLQNHTTYACDGDYLNLQCPRHSTISVQSAFYGQDYQMCSSQKPASQREDSLTCVAATTFQKVLDECQNQRACHLLVNSRVFGPDLCPGSSKYLLVSFKCQPNELKNKTVCEDQELKLHCHESKFLNIYSATYGRRTQERDICSSKAERLPPFDCLSYSALQVLSRRCYGKQRCKIIVNNHHFGSPCLPGVKKYLTVTYACVPKNILTAIDPAIANLKPSLKQKDGEYGINFDPSGSKVLRKDGILVSNSLAAFAYIRAHPERAALLFVSSVCIGLALTLCALVIRESCAKDFRDLQLGREQLVPGSDKVEEDSEDEEEEEDPSESDFPGELSGFCRTSYPIYSSIEAAELAERIERREQIIQEIWMNSGLDTSLPRNMGQFY.

Residues 1–23 (MLLPGRARQPPTPQPVQHPGLRR) are disordered. An N-terminal signal peptide occupies residues 1-48 (MLLPGRARQPPTPQPVQHPGLRRQVEPPGQLLRLFYCTVLVCSKEISA). Residues 49 to 322 (LTDFSGYLTK…AYIRAHPERA (274 aa)) are Extracellular-facing. Asn-62 carries N-linked (GlcNAc...) asparagine glycosylation. Residues 67-159 (ACDGDYLNLQ…KYLLVSFKCQ (93 aa)) enclose the SUEL-type lectin 1 domain. An N-linked (GlcNAc...) asparagine glycan is attached at Asn-165. An SUEL-type lectin 2 domain is found at 168–260 (VCEDQELKLH…KYLTVTYACV (93 aa)). The chain crosses the membrane as a helical span at residues 323 to 343 (ALLFVSSVCIGLALTLCALVI). The Cytoplasmic portion of the chain corresponds to 344-441 (RESCAKDFRD…SLPRNMGQFY (98 aa)). The interval 362–390 (VPGSDKVEEDSEDEEEEEDPSESDFPGEL) is disordered. The span at 368 to 383 (VEEDSEDEEEEEDPSE) shows a compositional bias: acidic residues.

The protein belongs to the EVA1 family. In terms of tissue distribution, ubiquitous.

It localises to the membrane. In terms of biological role, binds heparin. This chain is Protein eva-1 homolog C (EVA1C), found in Homo sapiens (Human).